A 383-amino-acid chain; its full sequence is UPF0425 pyridoxal phosphate-dependent protein Msp_0916 (383 aa).

N6-(pyridoxal phosphate)lysine is present on K207.

Belongs to the UPF0425 family. Pyridoxal 5'-phosphate is required as a cofactor.

The sequence is that of UPF0425 pyridoxal phosphate-dependent protein Msp_0916 from Methanosphaera stadtmanae (strain ATCC 43021 / DSM 3091 / JCM 11832 / MCB-3).